Reading from the N-terminus, the 63-residue chain is Large ribosomal subunit protein uL30 (63 aa).

This sequence belongs to the universal ribosomal protein uL30 family. In terms of assembly, part of the 50S ribosomal subunit.

This chain is Large ribosomal subunit protein uL30, found in Bradyrhizobium sp. (strain BTAi1 / ATCC BAA-1182).